Consider the following 153-residue polypeptide: FAD synthase (153 aa).

Residues 9–10 (TF), 14–17 (HPGH), and aspartate 92 each bind ATP.

This sequence belongs to the archaeal FAD synthase family. As to quaternary structure, homodimer. A divalent metal cation serves as cofactor.

It catalyses the reaction FMN + ATP + H(+) = FAD + diphosphate. It functions in the pathway cofactor biosynthesis; FAD biosynthesis; FAD from FMN: step 1/1. Its function is as follows. Catalyzes the transfer of the AMP portion of ATP to flavin mononucleotide (FMN) to produce flavin adenine dinucleotide (FAD) coenzyme. This Halorubrum lacusprofundi (strain ATCC 49239 / DSM 5036 / JCM 8891 / ACAM 34) protein is FAD synthase.